The sequence spans 259 residues: NAD(P)H-quinone oxidoreductase subunit K 2 (259 aa).

Residues Cys52, Cys53, Cys117, and Cys148 each contribute to the [4Fe-4S] cluster site.

The protein belongs to the complex I 20 kDa subunit family. As to quaternary structure, NDH-1 can be composed of about 15 different subunits; different subcomplexes with different compositions have been identified which probably have different functions. It depends on [4Fe-4S] cluster as a cofactor.

The protein resides in the cellular thylakoid membrane. The catalysed reaction is a plastoquinone + NADH + (n+1) H(+)(in) = a plastoquinol + NAD(+) + n H(+)(out). It carries out the reaction a plastoquinone + NADPH + (n+1) H(+)(in) = a plastoquinol + NADP(+) + n H(+)(out). NDH-1 shuttles electrons from an unknown electron donor, via FMN and iron-sulfur (Fe-S) centers, to quinones in the respiratory and/or the photosynthetic chain. The immediate electron acceptor for the enzyme in this species is believed to be plastoquinone. Couples the redox reaction to proton translocation, and thus conserves the redox energy in a proton gradient. Cyanobacterial NDH-1 also plays a role in inorganic carbon-concentration. This is NAD(P)H-quinone oxidoreductase subunit K 2 (ndhK2) from Cyanothece sp. (strain PCC 7425 / ATCC 29141).